The chain runs to 180 residues: ATP-dependent protease subunit HslV (180 aa).

Residue T7 is part of the active site. The Na(+) site is built by A165, C168, and T171.

Belongs to the peptidase T1B family. HslV subfamily. A double ring-shaped homohexamer of HslV is capped on each side by a ring-shaped HslU homohexamer. The assembly of the HslU/HslV complex is dependent on binding of ATP.

The protein localises to the cytoplasm. The enzyme catalyses ATP-dependent cleavage of peptide bonds with broad specificity.. With respect to regulation, allosterically activated by HslU binding. Protease subunit of a proteasome-like degradation complex believed to be a general protein degrading machinery. This Geobacillus kaustophilus (strain HTA426) protein is ATP-dependent protease subunit HslV.